A 139-amino-acid chain; its full sequence is Putative pre-16S rRNA nuclease (139 aa).

The protein belongs to the YqgF nuclease family.

It localises to the cytoplasm. In terms of biological role, could be a nuclease involved in processing of the 5'-end of pre-16S rRNA. The sequence is that of Putative pre-16S rRNA nuclease from Haemophilus influenzae (strain PittEE).